We begin with the raw amino-acid sequence, 97 residues long: uncharacterized protein (97 aa).

Disordered stretches follow at residues 1-20 and 52-97; these read MTEG…IASD and VPAA…GRRA.

This is an uncharacterized protein from Paracoccus pantotrophus (Thiosphaera pantotropha).